The sequence spans 549 residues: Glucose-6-phosphate isomerase (549 aa).

Residue Glu-355 is the Proton donor of the active site. Catalysis depends on residues His-386 and Lys-514.

Belongs to the GPI family.

The protein localises to the cytoplasm. It carries out the reaction alpha-D-glucose 6-phosphate = beta-D-fructose 6-phosphate. It functions in the pathway carbohydrate biosynthesis; gluconeogenesis. It participates in carbohydrate degradation; glycolysis; D-glyceraldehyde 3-phosphate and glycerone phosphate from D-glucose: step 2/4. Catalyzes the reversible isomerization of glucose-6-phosphate to fructose-6-phosphate. This chain is Glucose-6-phosphate isomerase, found in Salmonella choleraesuis (strain SC-B67).